The following is a 328-amino-acid chain: Phosphatidate cytidylyltransferase (328 aa).

The segment covering 15–29 (SGRSATKSVTTNDAG) has biased composition (polar residues). The interval 15-50 (SGRSATKSVTTNDAGTGNPAEQPARGAKQQPATETS) is disordered. Helical transmembrane passes span 58–78 (AAIV…VFVP), 103–123 (AGYL…VWLT), 124–144 (WPFG…VCMI), 173–193 (ATVF…MLVY), 202–222 (FCMM…GVLF), 239–259 (GFAG…TFLV), and 263–283 (PWIG…GDLV).

It belongs to the CDS family.

The protein resides in the cell membrane. The enzyme catalyses a 1,2-diacyl-sn-glycero-3-phosphate + CTP + H(+) = a CDP-1,2-diacyl-sn-glycerol + diphosphate. It participates in phospholipid metabolism; CDP-diacylglycerol biosynthesis; CDP-diacylglycerol from sn-glycerol 3-phosphate: step 3/3. This chain is Phosphatidate cytidylyltransferase (cdsA), found in Mycobacterium tuberculosis (strain CDC 1551 / Oshkosh).